Reading from the N-terminus, the 214-residue chain is Probable transaldolase 1 (214 aa).

The Schiff-base intermediate with substrate role is filled by lysine 83.

The protein belongs to the transaldolase family. Type 3B subfamily.

The protein resides in the cytoplasm. The enzyme catalyses D-sedoheptulose 7-phosphate + D-glyceraldehyde 3-phosphate = D-erythrose 4-phosphate + beta-D-fructose 6-phosphate. It participates in carbohydrate degradation; pentose phosphate pathway; D-glyceraldehyde 3-phosphate and beta-D-fructose 6-phosphate from D-ribose 5-phosphate and D-xylulose 5-phosphate (non-oxidative stage): step 2/3. In terms of biological role, transaldolase is important for the balance of metabolites in the pentose-phosphate pathway. The chain is Probable transaldolase 1 from Listeria monocytogenes serotype 4b (strain F2365).